The following is a 186-amino-acid chain: Shikimate kinase (186 aa).

An ATP-binding site is contributed by 15-20 (GAGKTT). T19 contacts Mg(2+). Substrate-binding residues include D37, R61, and G83. Position 121 (R121) interacts with ATP. R140 is a binding site for substrate.

It belongs to the shikimate kinase family. As to quaternary structure, monomer. It depends on Mg(2+) as a cofactor.

The protein resides in the cytoplasm. It catalyses the reaction shikimate + ATP = 3-phosphoshikimate + ADP + H(+). It functions in the pathway metabolic intermediate biosynthesis; chorismate biosynthesis; chorismate from D-erythrose 4-phosphate and phosphoenolpyruvate: step 5/7. In terms of biological role, catalyzes the specific phosphorylation of the 3-hydroxyl group of shikimic acid using ATP as a cosubstrate. This chain is Shikimate kinase, found in Psychrobacter cryohalolentis (strain ATCC BAA-1226 / DSM 17306 / VKM B-2378 / K5).